Consider the following 165-residue polypeptide: Transcriptional regulator MraZ (165 aa).

SpoVT-AbrB domains follow at residues 5–51 and 80–123; these read TYEG…GEEL and SAEL…NPER.

This sequence belongs to the MraZ family. In terms of assembly, forms oligomers.

The protein resides in the cytoplasm. It is found in the nucleoid. The sequence is that of Transcriptional regulator MraZ from Hyphomonas neptunium (strain ATCC 15444).